The primary structure comprises 421 residues: MSYHYDGIPDIEIDLYWNKARNHLLKAQVECEESLKLLSTIRSEMDSCQKSRLKLQFILNCLVNQVEFFSSVILEKCIAVELLDNEWSKVVLVGVVKDLNYWQDEITNKINALKNTKYDLNAEYKSLADFICEDHVEILQQKLDEVPFIKKQVSNIRQHYKSIKEGVQYQLKAGKVKKLKKYYETHFSRDNHLFELLEGEYLTKLNSYESELTDYIRSITDHFDKCSILKADGLPPQDLKDLFEVVKNDDAELEHIRELIYESDAEITQFYKNVEGTITSIKENVADFYGLSTKIMVELEKCEEYVSIFQDIAKLVSVYKESCIRKIEQVQELCEVYDKFKKAYFNLLKERERRKSVAIQMKSILDECKGKLMALNEDDLDHRQQFLHENGDYLPENIWPGKIDDMTPLYSLEYTIYNEQK.

The protein belongs to the ATG17 family. As to quaternary structure, forms a complex with ATG13, ATG29 and CIS1/ATG31. The ATG17-ATG29-ATG31 complex interacts with the ATG1-ATG13 complex. Forms a complex with SNX4 and ATG20. Interacts with ATG11.

Its subcellular location is the cytoplasm. The protein resides in the preautophagosomal structure membrane. Its function is as follows. Autophagy-specific protein that functions with ATG13, ATG29, and CIS1/ATG31 in response to autophagy-inducing signals as a scaffold to recruit other ATG proteins to organize pre-autophagosomal structure (PAS) formation. Modulates the timing and magnitude of the autophagy response, such as the size of the sequestering vesicles, through interacting with and regulating ATG1 kinase activity. Plays particularly a role in pexophagy and nucleophagy. With ATG13, is required for ATG1 activation by autophosphorylation. Recruits ATG9 to the pre-autophagosomal structure. The polypeptide is Autophagy-related protein 17 (Kluyveromyces marxianus (strain DMKU3-1042 / BCC 29191 / NBRC 104275) (Yeast)).